Here is a 697-residue protein sequence, read N- to C-terminus: Elongation factor G (697 aa).

Residues 10-285 (ERTRNIGIMA…AVVDYLPSPL (276 aa)) form the tr-type G domain. GTP-binding positions include 19 to 26 (AHIDAGKT), 83 to 87 (DTPGH), and 137 to 140 (NKMD).

The protein belongs to the TRAFAC class translation factor GTPase superfamily. Classic translation factor GTPase family. EF-G/EF-2 subfamily.

It localises to the cytoplasm. In terms of biological role, catalyzes the GTP-dependent ribosomal translocation step during translation elongation. During this step, the ribosome changes from the pre-translocational (PRE) to the post-translocational (POST) state as the newly formed A-site-bound peptidyl-tRNA and P-site-bound deacylated tRNA move to the P and E sites, respectively. Catalyzes the coordinated movement of the two tRNA molecules, the mRNA and conformational changes in the ribosome. The polypeptide is Elongation factor G (Pediococcus pentosaceus (strain ATCC 25745 / CCUG 21536 / LMG 10740 / 183-1w)).